A 228-amino-acid polypeptide reads, in one-letter code: CD302 antigen (228 aa).

Residues 1–20 (MPHAALSSLVLLSLATAIVA) form the signal peptide. The Extracellular portion of the chain corresponds to 21–165 (DCPSSTWVQF…YDKKYLSDNH (145 aa)). Positions 30–149 (FQGSCYAFLQ…CEISSVEGTL (120 aa)) constitute a C-type lectin domain. A glycan (N-linked (GlcNAc...) asparagine) is linked at N107. C125 and C140 form a disulfide bridge. Residues 166–186 (ILISTLVIASTVTLAVLGAII) form a helical membrane-spanning segment. The Cytoplasmic segment spans residues 187–228 (WFLYRRNARSGFTSFSPAPLSPYSDGCALVVAEEDEYAVQLD).

The protein localises to the membrane. The protein resides in the cell projection. Its subcellular location is the filopodium. It localises to the cytoplasm. It is found in the cell cortex. The protein localises to the microvillus. Its function is as follows. Potential multifunctional C-type lectin receptor that may play roles in endocytosis and phagocytosis as well as in cell adhesion and migration. This chain is CD302 antigen (Cd302), found in Mus musculus (Mouse).